The following is a 237-amino-acid chain: Phosphoribosylaminoimidazole-succinocarboxamide synthase (237 aa).

It belongs to the SAICAR synthetase family.

It carries out the reaction 5-amino-1-(5-phospho-D-ribosyl)imidazole-4-carboxylate + L-aspartate + ATP = (2S)-2-[5-amino-1-(5-phospho-beta-D-ribosyl)imidazole-4-carboxamido]succinate + ADP + phosphate + 2 H(+). It participates in purine metabolism; IMP biosynthesis via de novo pathway; 5-amino-1-(5-phospho-D-ribosyl)imidazole-4-carboxamide from 5-amino-1-(5-phospho-D-ribosyl)imidazole-4-carboxylate: step 1/2. This Pseudomonas fluorescens (strain SBW25) protein is Phosphoribosylaminoimidazole-succinocarboxamide synthase.